The sequence spans 210 residues: Phosphate propanoyltransferase (210 aa).

26–28 (ISN) contacts CoA. 2 residues coordinate Zn(2+): H30 and H32. Residues K71 and R78 each contribute to the CoA site. A phosphate-binding site is contributed by R84. The Zn(2+) site is built by E90, H138, H140, and H186. N193 is a CoA binding site.

It belongs to the PduL family. Zn(2+) serves as cofactor.

It is found in the bacterial microcompartment. It catalyses the reaction propanoyl-CoA + phosphate = propanoyl phosphate + CoA. It participates in polyol metabolism; 1,2-propanediol degradation. Functionally, involved in 1,2-propanediol (1,2-PD) utilization within the bacterial microcompartment (BMC) dedicated to 1,2-PD degradation by catalyzing the conversion of propanoyl-CoA to propanoyl-phosphate. Required for optimal growth on 1,2-PD. CoA is regenerated within the BMC (for use by PduP) via this enzyme, although there must also be cofactor transport across the BMC. Directly targeted to the BMC. Expression of a cosmid containing the full 21-gene pdu operon in E.coli allows E.coli to grow on 1,2-propanediol (1,2-PD) with the appearance of bacterial microcompartments (BMC) in its cytoplasm. Its function is as follows. The 1,2-PD-specific bacterial microcompartment (BMC) concentrates low levels of 1,2-PD catabolic enzymes, concentrates volatile reaction intermediates thus enhancing pathway flux and keeps the level of toxic, mutagenic propionaldehyde low. This is Phosphate propanoyltransferase from Citrobacter freundii.